A 32-amino-acid polypeptide reads, in one-letter code: NGWNDNKTFILIGSASWAALVLLVGSLNSFVI.

Residues 9–31 (FILIGSASWAALVLLVGSLNSFV) traverse the membrane as a helical segment.

This sequence belongs to the PsbZ family. In terms of assembly, PSII is composed of 1 copy each of membrane proteins PsbA, PsbB, PsbC, PsbD, PsbE, PsbF, PsbH, PsbI, PsbJ, PsbK, PsbL, PsbM, PsbT, PsbY, PsbZ, Psb30/Ycf12, at least 3 peripheral proteins of the oxygen-evolving complex and a large number of cofactors. It forms dimeric complexes.

It localises to the plastid. The protein resides in the chloroplast thylakoid membrane. In terms of biological role, may control the interaction of photosystem II (PSII) cores with the light-harvesting antenna, regulates electron flow through the 2 photosystem reaction centers. PSII is a light-driven water plastoquinone oxidoreductase, using light energy to abstract electrons from H(2)O, generating a proton gradient subsequently used for ATP formation. This chain is Photosystem II reaction center protein Z, found in Euglena viridis (Cercaria viridis).